The following is a 473-amino-acid chain: 3-isopropylmalate dehydratase large subunit (473 aa).

Positions 354, 414, and 417 each coordinate [4Fe-4S] cluster.

This sequence belongs to the aconitase/IPM isomerase family. LeuC type 1 subfamily. Heterodimer of LeuC and LeuD. [4Fe-4S] cluster is required as a cofactor.

It catalyses the reaction (2R,3S)-3-isopropylmalate = (2S)-2-isopropylmalate. Its pathway is amino-acid biosynthesis; L-leucine biosynthesis; L-leucine from 3-methyl-2-oxobutanoate: step 2/4. Functionally, catalyzes the isomerization between 2-isopropylmalate and 3-isopropylmalate, via the formation of 2-isopropylmaleate. The protein is 3-isopropylmalate dehydratase large subunit of Mycobacterium tuberculosis (strain CDC 1551 / Oshkosh).